The sequence spans 224 residues: Respiratory supercomplex factor 2, mitochondrial (224 aa).

The Mitochondrial intermembrane segment spans residues 1-13; sequence MKILTQDEIEAHR. A helical transmembrane segment spans residues 14–38; sequence SHTLKGGIEGALAGFAISAIIFKVL. Topologically, residues 39-47 are mitochondrial matrix; that stretch reads PRRYPKFKP. A helical membrane pass occupies residues 48–75; that stretch reads STLTWSIKTALWITPPTVLTAICAEEAS. Topologically, residues 76 to 103 are mitochondrial intermembrane; the sequence is NNFDATMYGSGSSSEDALDEHRRWKSLS. In terms of domain architecture, HIG1 spans 89–180; the sequence is SEDALDEHRR…YENKLHPNKQ (92 aa). A helical membrane pass occupies residues 104 to 133; the sequence is TKDKFVEGLSNNKYKIITGAWAASLYGSWV. The Mitochondrial matrix segment spans residues 134–142; that stretch reads IVNKDPIMT. The helical transmembrane segment at 143–173 threads the bilayer; that stretch reads KAQKIVQARMYAQFITVGLLLASVGLSMYEN. Over 174–184 the chain is Mitochondrial intermembrane; the sequence is KLHPNKQKVNE. The helical transmembrane segment at 185-204 threads the bilayer; that stretch reads MRRWENALRVAEEEERLEKE. Residues 205–224 lie on the Mitochondrial matrix side of the membrane; sequence GRRTGYVSNEERINSKIFKS.

In terms of assembly, associates with a subpopulation of the cytochrome bc1-cytochrome c oxidase supercomplexes. Associates in substoichiometric amounts with complex IV. Interacts with COX3.

It localises to the mitochondrion membrane. Functionally, assembly factor that plays a role in the assembly of the respiratory chain supercomplexes (SCs) composed of ubiquinol-cytochrome c oxidoreductase (cytochrome b-c1 complex, complex III, CIII) and cytochrome c oxidase (complex IV, CIV). May be required for late-stage assembly of the COX12 and COX13 subunits. Required for the generation and maintenance of a normal proton motive force (PMF) across the inner mitochondrial membrane (IMM) by preventing proton leakage through an inactive population of CIV that accumulates when RCF1 and/or RCF2 proteins are absent. This Saccharomyces cerevisiae (strain ATCC 204508 / S288c) (Baker's yeast) protein is Respiratory supercomplex factor 2, mitochondrial (RCF2).